Here is a 376-residue protein sequence, read N- to C-terminus: Protein-arginine rhamnosyltransferase (376 aa).

DTDP-beta-L-rhamnose is bound by residues 13–16, Tyr192, 252–254, and 270–274; these read NYGD, MAQ, and RGEDS. 14–15 contacts dTDP; that stretch reads YG. Asp16 (proton acceptor) is an active-site residue. DTDP contacts are provided by residues Tyr192, 252 to 254, and 270 to 274; these read MAQ and RGEDS. Residue Glu272 is part of the active site.

This sequence belongs to the glycosyltransferase 104 family.

It carries out the reaction dTDP-beta-L-rhamnose + L-arginyl-[protein] = N(omega)-(alpha-L-rhamnosyl)-L-arginyl-[protein] + dTDP + H(+). Protein-arginine rhamnosyltransferase that catalyzes the transfer of a single rhamnose to elongation factor P (EF-P) on 'Lys-32', a modification required for EF-P-dependent rescue of polyproline stalled ribosomes. This chain is Protein-arginine rhamnosyltransferase, found in Pseudomonas aeruginosa (strain ATCC 15692 / DSM 22644 / CIP 104116 / JCM 14847 / LMG 12228 / 1C / PRS 101 / PAO1).